We begin with the raw amino-acid sequence, 451 residues long: Deoxyguanosinetriphosphate triphosphohydrolase-like protein (451 aa).

The HD domain maps to 61–274; it reads RLTHSLEVAQ…MELADDIAYG (214 aa).

The protein belongs to the dGTPase family. Type 2 subfamily.

The sequence is that of Deoxyguanosinetriphosphate triphosphohydrolase-like protein from Actinobacillus succinogenes (strain ATCC 55618 / DSM 22257 / CCUG 43843 / 130Z).